The sequence spans 415 residues: Lysosome-associated membrane glycoprotein 2 (415 aa).

A signal peptide spans 1 to 25 (MCLSPVKGAKLILIFLFLGAVQSNA). Positions 26 to 188 (LIVNLTDSKG…SKNEQVCEED (163 aa)) are first lumenal domain. Residues 26-379 (LIVNLTDSKG…AQDCSADEDN (354 aa)) are Lumenal-facing. 7 N-linked (GlcNAc...) asparagine glycosylation sites follow: Asn29, Asn45, Asn54, Asn57, Asn97, Asn115, and Asn175. An intrachain disulfide couples Cys37 to Cys75. Cysteines 149 and 185 form a disulfide. A hinge region spans residues 189 to 233 (QTPTTVAPIIHTTAPSTTTTLTPTSTPTPTPTPTPTVGNYSIRNG). Residues 202–213 (APSTTTTLTPTS) show a composition bias toward low complexity. The segment at 202–227 (APSTTTTLTPTSTPTPTPTPTPTVGN) is disordered. Asn227, Asn234, Asn247, Asn265, Asn280, Asn312, Asn317, Asn322, and Asn361 each carry an N-linked (GlcNAc...) asparagine glycan. The tract at residues 234 to 379 (NTTCLLATMG…AQDCSADEDN (146 aa)) is second lumenal domain. Residues Cys237 and Cys270 are joined by a disulfide bond. Cys336 and Cys373 form a disulfide bridge. The chain crosses the membrane as a helical span at residues 380–404 (FLVPIAVGAALGGVLILVLLAYFIG). Over 405–415 (LKRHHTGYEQF) the chain is Cytoplasmic. Residues 406-409 (KRHH) are important for binding and subsequent lysosomal degradation of target proteins.

It belongs to the LAMP family. Monomer. Forms large homooligomers. Interacts (via its cytoplasmic region) with HSPA8; HSPA8 mediates recruitment of proteins with a KFERQ motif to the surface of the lysosome for chaperone-mediated autophagy. Interacts with HSP90 in the lysosome lumen; this enhances LAMP2 stability. Interacts with MLLT11. Interacts with ABCB9. Interacts with FURIN. Interacts with CT55; this interaction may be important for LAMP2 protein stability. Interacts with TMEM175; inhibiting the proton channel activity of TMEM175. Forms a ternary complex with RAB7A and RUFY4 (via RUN domain); the interaction with RAB7A is mediated by RUFY4 (via RUN and coiled coil domains). Post-translationally, extensively N-glycosylated. Contains a minor proportion of O-linked glycans. In terms of tissue distribution, detected in liver and kidney (at protein level). Detected in liver and kidney.

It localises to the lysosome membrane. The protein localises to the endosome membrane. The protein resides in the cytoplasmic vesicle. It is found in the autophagosome membrane. Its subcellular location is the cell membrane. Functionally, lysosomal membrane glycoprotein which plays an important role in lysosome biogenesis, lysosomal pH regulation and autophagy. Acts as an important regulator of lysosomal lumen pH regulation by acting as a direct inhibitor of the proton channel TMEM175, facilitating lysosomal acidification for optimal hydrolase activity. Plays an important role in chaperone-mediated autophagy, a process that mediates lysosomal degradation of proteins in response to various stresses and as part of the normal turnover of proteins with a long biological half-live. Functions by binding target proteins, such as GAPDH, NLRP3 and MLLT11, and targeting them for lysosomal degradation. In the chaperone-mediated autophagy, acts downstream of chaperones, such as HSPA8/HSC70, which recognize and bind substrate proteins and mediate their recruitment to lysosomes, where target proteins bind LAMP2. Plays a role in lysosomal protein degradation in response to starvation. Required for the fusion of autophagosomes with lysosomes during autophagy. Cells that lack LAMP2 express normal levels of VAMP8, but fail to accumulate STX17 on autophagosomes, which is the most likely explanation for the lack of fusion between autophagosomes and lysosomes. Required for normal degradation of the contents of autophagosomes. Required for efficient MHC class II-mediated presentation of exogenous antigens via its function in lysosomal protein degradation; antigenic peptides generated by proteases in the endosomal/lysosomal compartment are captured by nascent MHC II subunits. Is not required for efficient MHC class II-mediated presentation of endogenous antigens. The sequence is that of Lysosome-associated membrane glycoprotein 2 (Lamp2) from Mus musculus (Mouse).